The sequence spans 432 residues: UDP-N-acetylglucosamine 1-carboxyvinyltransferase (432 aa).

22–23 (KN) provides a ligand contact to phosphoenolpyruvate. R92 contacts UDP-N-acetyl-alpha-D-glucosamine. The active-site Proton donor is the C116. C116 is subject to 2-(S-cysteinyl)pyruvic acid O-phosphothioketal. UDP-N-acetyl-alpha-D-glucosamine is bound by residues 121–125 (RPVDQ), D307, and I329.

Belongs to the EPSP synthase family. MurA subfamily.

It localises to the cytoplasm. The catalysed reaction is phosphoenolpyruvate + UDP-N-acetyl-alpha-D-glucosamine = UDP-N-acetyl-3-O-(1-carboxyvinyl)-alpha-D-glucosamine + phosphate. It functions in the pathway cell wall biogenesis; peptidoglycan biosynthesis. In terms of biological role, cell wall formation. Adds enolpyruvyl to UDP-N-acetylglucosamine. This chain is UDP-N-acetylglucosamine 1-carboxyvinyltransferase, found in Psychrobacter sp. (strain PRwf-1).